A 177-amino-acid polypeptide reads, in one-letter code: MKLPKEGDFITIQSYKHDGEIHRTWRDTMVLKTTENAIIGVNNHTLVTENDGRRWVTREPAIVYFHKKYWFNIIAMIRENGVSYYCNLASPYVLDNEALKYIDYDLDVKVFADGEKRLLDVDEYERHRKAMKYSDDIDFILKENVKILVDWINNQRGPFSPAYVNIWYKRYLELRSR.

Arg-23 serves as the catalytic Proton donor. Residues Asn-87, Asp-103, Asp-105, Asp-107, Asp-120, and Glu-123 each contribute to the Mg(2+) site.

It belongs to the Ntdp family. Mg(2+) is required as a cofactor.

The catalysed reaction is a ribonucleoside 5'-triphosphate + H2O = a ribonucleoside 5'-diphosphate + phosphate + H(+). It carries out the reaction a ribonucleoside 5'-diphosphate + H2O = a ribonucleoside 5'-phosphate + phosphate + H(+). Its function is as follows. Has nucleoside phosphatase activity towards nucleoside triphosphates and nucleoside diphosphates. In Streptococcus suis (strain 98HAH33), this protein is Nucleoside triphosphate/diphosphate phosphatase.